We begin with the raw amino-acid sequence, 156 residues long: Endoribonuclease YbeY (156 aa).

Zn(2+) is bound by residues His-119, His-123, and His-129.

The protein belongs to the endoribonuclease YbeY family. It depends on Zn(2+) as a cofactor.

The protein resides in the cytoplasm. Functionally, single strand-specific metallo-endoribonuclease involved in late-stage 70S ribosome quality control and in maturation of the 3' terminus of the 16S rRNA. The polypeptide is Endoribonuclease YbeY (Buchnera aphidicola subsp. Cinara cedri (strain Cc)).